The primary structure comprises 300 residues: DNA packaging protein OPG160 (300 aa).

This sequence belongs to the orthopoxvirus OPG160 protein family. As to quaternary structure, interacts with protein OPG137.

In terms of biological role, participates in viral DNA packaging and virion morphogenesis. The polypeptide is DNA packaging protein OPG160 (OPG160) (Monkeypox virus).